The following is a 203-amino-acid chain: MYEYFLGQVTDVTPGYVVIEVSGIGYKVLTANPYRYQVGPTAVKMYIHQAVSENGMSLFGFFDADEKALFEKLLGVSGIGPKSALAILANNDHAGLIQAINQENATYLTSFPGVGKKTAQQIVLDLKGKLNDLNVDVTGQTALDVDAPAVDGALADALAALEALGYSKADVKKVTKKLETFSQTQGADTNTLLSEGLRLLMKK.

Residues 1-62 (MYEYFLGQVT…ENGMSLFGFF (62 aa)) are domain I. The segment at 63–141 (DADEKALFEK…DLNVDVTGQT (79 aa)) is domain II. The flexible linker stretch occupies residues 142-148 (ALDVDAP). The tract at residues 149-203 (AVDGALADALAALEALGYSKADVKKVTKKLETFSQTQGADTNTLLSEGLRLLMKK) is domain III.

The protein belongs to the RuvA family. In terms of assembly, homotetramer. Forms an RuvA(8)-RuvB(12)-Holliday junction (HJ) complex. HJ DNA is sandwiched between 2 RuvA tetramers; dsDNA enters through RuvA and exits via RuvB. An RuvB hexamer assembles on each DNA strand where it exits the tetramer. Each RuvB hexamer is contacted by two RuvA subunits (via domain III) on 2 adjacent RuvB subunits; this complex drives branch migration. In the full resolvosome a probable DNA-RuvA(4)-RuvB(12)-RuvC(2) complex forms which resolves the HJ.

The protein localises to the cytoplasm. In terms of biological role, the RuvA-RuvB-RuvC complex processes Holliday junction (HJ) DNA during genetic recombination and DNA repair, while the RuvA-RuvB complex plays an important role in the rescue of blocked DNA replication forks via replication fork reversal (RFR). RuvA specifically binds to HJ cruciform DNA, conferring on it an open structure. The RuvB hexamer acts as an ATP-dependent pump, pulling dsDNA into and through the RuvAB complex. HJ branch migration allows RuvC to scan DNA until it finds its consensus sequence, where it cleaves and resolves the cruciform DNA. This Lactiplantibacillus plantarum (strain ATCC BAA-793 / NCIMB 8826 / WCFS1) (Lactobacillus plantarum) protein is Holliday junction branch migration complex subunit RuvA.